The sequence spans 365 residues: Alpha-keto acid-binding periplasmic protein TakP (365 aa).

A signal peptide (tat-type signal) is located at residues 1 to 26 (MDRRSFITKAAVGGAAASALAAPALA). Residues 99–100 (YY), Gln156, and Arg177 each bind substrate. Gln156 is a Na(+) binding site. Glu214, Trp215, and Glu240 together coordinate Na(+).

Belongs to the bacterial solute-binding protein 7 family. As to quaternary structure, homodimer. The complex comprises the extracytoplasmic solute receptor protein TakP, and the two transmembrane proteins TakQ and TakM. Post-translationally, predicted to be exported by the Tat system. The position of the signal peptide cleavage has not been experimentally proven.

Its subcellular location is the periplasm. Its function is as follows. Part of the tripartite ATP-independent periplasmic (TRAP) transport system TakPQM involved in the uptake of alpha-keto acids. This protein specifically binds alpha-keto acids including pyruvate, oxobutyrate, oxovalerate and 4-methyl-2-oxovalerate. Ligand-binding affinity increases with the increasing chain length of the aliphatic backbone of the ligand. Is not able to bind alpha-ketoglutarate. This Cereibacter sphaeroides (strain ATCC 17023 / DSM 158 / JCM 6121 / CCUG 31486 / LMG 2827 / NBRC 12203 / NCIMB 8253 / ATH 2.4.1.) (Rhodobacter sphaeroides) protein is Alpha-keto acid-binding periplasmic protein TakP.